We begin with the raw amino-acid sequence, 71 residues long: Small, acid-soluble spore protein I (71 aa).

Belongs to the SspI family.

The protein localises to the spore core. In Bacillus velezensis (strain DSM 23117 / BGSC 10A6 / LMG 26770 / FZB42) (Bacillus amyloliquefaciens subsp. plantarum), this protein is Small, acid-soluble spore protein I.